A 527-amino-acid chain; its full sequence is Phospholipase A1-Igamma3, chloroplastic (527 aa).

The N-terminal 52 residues, 1–52, are a transit peptide targeting the chloroplast; the sequence is MASLSLPITLKNPRFFSSSPQNIFKTQPQTLVLTTKFKTCSIICSSSCTSIS. Low complexity predominate over residues 55–65; the sequence is TTQQKQSNKQT. Positions 55 to 82 are disordered; that stretch reads TTQQKQSNKQTHVSDNKREEKAEEEEEE. Over residues 66–75 the composition is skewed to basic and acidic residues; the sequence is HVSDNKREEK. The GXSXG motif lies at 300-304; sequence GHSLG. Catalysis depends on S302, which acts as the Acyl-ester intermediate. Catalysis depends on charge relay system residues D366 and H423.

This sequence belongs to the AB hydrolase superfamily. Lipase family. In terms of tissue distribution, highly expressed in flowers. Lower levels in seedlings, leaves and stems.

It is found in the plastid. Its subcellular location is the chloroplast. The enzyme catalyses 1,2-dihexadecanoyl-sn-glycero-3-phosphocholine + H2O = 2-hexadecanoyl-sn-glycero-3-phosphocholine + hexadecanoate + H(+). It carries out the reaction a 1,2-diacyl-3-O-(beta-D-galactosyl)-sn-glycerol + H2O = an acyl-3-O-(beta-D-galactosyl)-sn-glycerol + a fatty acid + H(+). The catalysed reaction is a 1,2-diacyl-3-O-[alpha-D-galactosyl-(1-&gt;6)-beta-D-galactosyl]-sn-glycerol + H2O = acyl-3-O-[alpha-D-galactosyl-(1-&gt;6)-beta-D-galactosyl]-sn-glycerol + a fatty acid + H(+). Its function is as follows. Acylhydrolase that catalyzes the hydrolysis of phosphatidylcholine at the sn-1 position. Moderate activity toward phosphatidylcholine (PC), monogalactosyldiacylglycerol (MGDG), digalactosyldiacylglycerol (DGDG) and triacylglycerol (TAG). The protein is Phospholipase A1-Igamma3, chloroplastic of Arabidopsis thaliana (Mouse-ear cress).